A 229-amino-acid polypeptide reads, in one-letter code: Response regulator SaeR (229 aa).

In terms of domain architecture, Response regulatory spans 3–116; sequence HLLIVDDEKD…ELVLRTNNLL (114 aa). D51 is modified (4-aspartylphosphate). The segment at residues 128 to 227 is a DNA-binding region (ompR/PhoB-type); it reads IEQLEFDGLV…VWGLGYKFER (100 aa).

In terms of processing, phosphorylated by SaeS.

Its subcellular location is the cytoplasm. In terms of biological role, member of the two-component regulatory system SaeR/SaeS. Probably functions as a transcriptional regulator via a specific DNA-binding domain, recognizing motifs near the promoter sequences of target genes. The sequence is that of Response regulator SaeR (saeR) from Staphylococcus epidermidis (strain ATCC 35984 / DSM 28319 / BCRC 17069 / CCUG 31568 / BM 3577 / RP62A).